The chain runs to 188 residues: F-box only protein 36 (188 aa).

Residues 91–137 form the F-box domain; that stretch reads FDFLERLSDDLLLTIISYLDLEDIARLCQTSHRFAKLCMSDKLWEQI.

As to quaternary structure, directly interacts with SKP1 and CUL1.

Its function is as follows. Substrate-recognition component of the SCF (SKP1-CUL1-F-box protein)-type E3 ubiquitin ligase complex. This Homo sapiens (Human) protein is F-box only protein 36 (FBXO36).